Here is a 635-residue protein sequence, read N- to C-terminus: 1-deoxy-D-xylulose-5-phosphate synthase (635 aa).

Thiamine diphosphate is bound by residues histidine 79 and 120-122 (GHS). Aspartate 151 is a binding site for Mg(2+). Thiamine diphosphate is bound by residues 152–153 (GA), asparagine 182, tyrosine 291, and glutamate 372. Asparagine 182 contacts Mg(2+).

This sequence belongs to the transketolase family. DXPS subfamily. Homodimer. Mg(2+) is required as a cofactor. The cofactor is thiamine diphosphate.

It catalyses the reaction D-glyceraldehyde 3-phosphate + pyruvate + H(+) = 1-deoxy-D-xylulose 5-phosphate + CO2. It functions in the pathway metabolic intermediate biosynthesis; 1-deoxy-D-xylulose 5-phosphate biosynthesis; 1-deoxy-D-xylulose 5-phosphate from D-glyceraldehyde 3-phosphate and pyruvate: step 1/1. Its function is as follows. Catalyzes the acyloin condensation reaction between C atoms 2 and 3 of pyruvate and glyceraldehyde 3-phosphate to yield 1-deoxy-D-xylulose-5-phosphate (DXP). This Xylella fastidiosa (strain M12) protein is 1-deoxy-D-xylulose-5-phosphate synthase.